Here is a 191-residue protein sequence, read N- to C-terminus: Fe/S biogenesis protein NfuA (191 aa).

Residues Cys-149 and Cys-152 each coordinate [4Fe-4S] cluster.

This sequence belongs to the NfuA family. Homodimer. Requires [4Fe-4S] cluster as cofactor.

Functionally, involved in iron-sulfur cluster biogenesis. Binds a 4Fe-4S cluster, can transfer this cluster to apoproteins, and thereby intervenes in the maturation of Fe/S proteins. Could also act as a scaffold/chaperone for damaged Fe/S proteins. This chain is Fe/S biogenesis protein NfuA, found in Hamiltonella defensa subsp. Acyrthosiphon pisum (strain 5AT).